We begin with the raw amino-acid sequence, 238 residues long: Ribonuclease PH (238 aa).

Phosphate is bound by residues arginine 86 and glycine 124 to arginine 126.

This sequence belongs to the RNase PH family. As to quaternary structure, homohexameric ring arranged as a trimer of dimers.

It carries out the reaction tRNA(n+1) + phosphate = tRNA(n) + a ribonucleoside 5'-diphosphate. Its function is as follows. Phosphorolytic 3'-5' exoribonuclease that plays an important role in tRNA 3'-end maturation. Removes nucleotide residues following the 3'-CCA terminus of tRNAs; can also add nucleotides to the ends of RNA molecules by using nucleoside diphosphates as substrates, but this may not be physiologically important. Probably plays a role in initiation of 16S rRNA degradation (leading to ribosome degradation) during starvation. This is Ribonuclease PH from Erwinia tasmaniensis (strain DSM 17950 / CFBP 7177 / CIP 109463 / NCPPB 4357 / Et1/99).